The sequence spans 1594 residues: Mucin-like protein (1594 aa).

Over 1 to 1530 (DTTAGPDTTS…YETREDGLEM (1530 aa)) the chain is Extracellular. 3 TSP type-1 domains span residues 141 to 196 (DGGF…GSCP), 198 to 253 (DGNF…PPCP), and 255 to 310 (DGNF…GPCP). 9 disulfide bridges follow: cysteine 153-cysteine 190, cysteine 157-cysteine 195, cysteine 168-cysteine 180, cysteine 210-cysteine 247, cysteine 214-cysteine 252, cysteine 225-cysteine 237, cysteine 267-cysteine 304, cysteine 271-cysteine 309, and cysteine 282-cysteine 294. Positions 400–566 (LTISDDAFEQ…GVWFFRLEMN (167 aa)) constitute an NIDO domain. In terms of domain architecture, AMOP spans 568–706 (ILSLAGKKCN…RSCFGYTLRR (139 aa)). The region spanning 706–901 (RRGLIFGDPH…KWQINASQSL (196 aa)) is the VWFD domain. EGF-like domains lie at 1063–1108 (LILL…QYCQ) and 1110–1156 (KIDA…SICE). 14 cysteine pairs are disulfide-bonded: cysteine 1067–cysteine 1075, cysteine 1069–cysteine 1096, cysteine 1098–cysteine 1107, cysteine 1114–cysteine 1127, cysteine 1121–cysteine 1141, cysteine 1144–cysteine 1155, cysteine 1161–cysteine 1173, cysteine 1169–cysteine 1182, cysteine 1285–cysteine 1296, cysteine 1292–cysteine 1305, cysteine 1307–cysteine 1320, cysteine 1326–cysteine 1341, cysteine 1334–cysteine 1350, and cysteine 1352–cysteine 1363. The region spanning 1157 to 1191 (DIDECSDANVSKCDHSCINLPGSYVCDCNQGFSLE) is the EGF-like 3; calcium-binding domain. Residues 1281 to 1321 (DINECTTHRHKCSQICHNLDGSYTCSCQPGFNLSPDQTTCE) enclose the EGF-like 4; calcium-binding domain. One can recognise an EGF-like 5; calcium-binding domain in the interval 1322 to 1364 (DIDECGLINEAHCEGSLEICINTMGSFRCECQDGFHRVNDTCQ). The helical transmembrane segment at 1531–1551 (IWLLVGVSVAVAVPLMIVIVI) threads the bilayer. Over 1552 to 1593 (LYREYRRIAKQRRKTNNFDLRQWSGARERTIYSGFTNSKSAR) the chain is Cytoplasmic.

Component of the acid-insoluble and acid-soluble organic matrix of the aragonitic skeleton (at protein level).

The protein localises to the membrane. This Acropora millepora (Staghorn coral) protein is Mucin-like protein.